Here is a 1088-residue protein sequence, read N- to C-terminus: RNA-directed RNA polymerase (1088 aa).

Positions 501–687 (LSYGDVTRFL…AKRYIAGGKI (187 aa)) constitute a RdRp catalytic domain.

Belongs to the reoviridae RNA-directed RNA polymerase family. In terms of assembly, interacts with VP3 (Potential). Interacts with VP2; this interaction activates VP1. Interacts with NSP5; this interaction is probably necessary for the formation of functional virus factories. Interacts with NSP2; this interaction is weak. Mg(2+) serves as cofactor.

It is found in the virion. The enzyme catalyses RNA(n) + a ribonucleoside 5'-triphosphate = RNA(n+1) + diphosphate. Functionally, RNA-directed RNA polymerase that is involved in both transcription and genome replication. Together with VP3 capping enzyme, forms an enzyme complex positioned near the channels situated at each of the five-fold vertices of the core. Following infection, the outermost layer of the virus is lost, leaving a double-layered particle (DLP) made up of the core and VP6 shell. VP1 then catalyzes the transcription of fully conservative plus-strand genomic RNAs that are extruded through the DLP's channels into the cytoplasm where they function as mRNAs for translation of viral proteins. One copy of each of the viral (+)RNAs is also recruited during core assembly, together with newly synthesized polymerase complexes and VP2. The polymerase of these novo-formed particles catalyzes the synthesis of complementary minus-strands leading to dsRNA formation. To do so, the polymerase specifically recognizes and binds 4 bases 5'-UGUG-3' in the conserved 3'-sequence of plus-strand RNA templates. VP2 presumably activates the autoinhibited VP1-RNA complex to coordinate packaging and genome replication. Once dsRNA synthesis is complete, the polymerase switches to the transcriptional mode, thus providing secondary transcription. This Rotavirus A (strain RVA/Pig/United States/Gottfried/1983/G4P2B[6]) (RV-A) protein is RNA-directed RNA polymerase.